Here is a 144-residue protein sequence, read N- to C-terminus: Bacilliredoxin BLi02323/BL05224 (144 aa).

This sequence belongs to the bacilliredoxin family.

The chain is Bacilliredoxin BLi02323/BL05224 from Bacillus licheniformis (strain ATCC 14580 / DSM 13 / JCM 2505 / CCUG 7422 / NBRC 12200 / NCIMB 9375 / NCTC 10341 / NRRL NRS-1264 / Gibson 46).